Here is a 201-residue protein sequence, read N- to C-terminus: UPF0637 protein LSEI_1198 (201 aa).

It belongs to the UPF0637 family.

In Lacticaseibacillus paracasei (strain ATCC 334 / BCRC 17002 / CCUG 31169 / CIP 107868 / KCTC 3260 / NRRL B-441) (Lactobacillus paracasei), this protein is UPF0637 protein LSEI_1198.